Consider the following 216-residue polypeptide: Thymidylate kinase (216 aa).

10 to 17 (GIDGCGKT) serves as a coordination point for ATP.

It belongs to the thymidylate kinase family.

The enzyme catalyses dTMP + ATP = dTDP + ADP. Phosphorylation of dTMP to form dTDP in both de novo and salvage pathways of dTTP synthesis. This Prochlorococcus marinus (strain MIT 9303) protein is Thymidylate kinase.